The chain runs to 440 residues: Xylose isomerase (440 aa).

Residues His100 and Asp103 contribute to the active site. The Mg(2+) site is built by Glu231, Glu267, His270, Asp295, Asp306, Asp308, and Asp338.

It belongs to the xylose isomerase family. In terms of assembly, homotetramer. Mg(2+) is required as a cofactor.

The protein resides in the cytoplasm. It catalyses the reaction alpha-D-xylose = alpha-D-xylulofuranose. The sequence is that of Xylose isomerase from Burkholderia ambifaria (strain MC40-6).